A 443-amino-acid polypeptide reads, in one-letter code: MSSTDNIVSGKAQHSYWRKSDTTWTLGLFGTAIGAGVLFFPIRAGFGGLIPILVMLVLAYPIAFYCHRALARLCLSGANPSGNITETVEEHFGKTGGVVITFLYFFAICPLLWIYGVTITNTFMTFWENQLHLPALNRGFVALFLLLLMAVIIWFGRDLMVKVMSFLVWPFIASLVLISLSLIPYWNSAVIDQVDLSALSLTGHDGILVTVWLGISIMVFSFNFSPIVSSFVVFKREEYEKKFGRDFTERKCSKIISRASILMVAVVMFFAFSCLFALSPQNMAEAKAQNIPVLSYLANHFSSMSGSQSSFALTLEYAASIIALVAIFKSFFGHYLGTLEGLNRLIIKFAYKGDKSKISMSKLNTLSMVFIMGSTWLVAYVNPNILDLIEAMGAPIIASLLCLLPMYAIHKVPSLAKYRGRIDNVFVTAIGLLTISNIVYKVF.

11 consecutive transmembrane segments (helical) span residues Thr22–Ile42, Ala44–Phe64, Gly97–Val117, Ala135–Phe155, Val163–Ile183, Ile207–Ile227, Ala259–Ser279, Ala319–Leu339, Leu366–Leu386, Ile389–Ile409, and Ile422–Val442.

The protein belongs to the amino acid/polyamine transporter 2 family. SdaC/TdcC subfamily.

The protein localises to the cell inner membrane. It carries out the reaction L-threonine(in) + H(+)(in) = L-threonine(out) + H(+)(out). The catalysed reaction is L-serine(in) + H(+)(in) = L-serine(out) + H(+)(out). Its function is as follows. Involved in the import of threonine and serine into the cell, with the concomitant import of a proton (symport system). The polypeptide is Threonine/serine transporter TdcC (Escherichia fergusonii (strain ATCC 35469 / DSM 13698 / CCUG 18766 / IAM 14443 / JCM 21226 / LMG 7866 / NBRC 102419 / NCTC 12128 / CDC 0568-73)).